Here is a 457-residue protein sequence, read N- to C-terminus: MSWSILEFLRKNPEELKNNLKRRAIDVSLVDKAVELDKKWRQVLQEVERLRHQHNVLSSQIPKLSGEERKKKIEESKNLLKILEDKEKELEKIEVERDRLLSSLPNLVADDVPNGPDDSYNIPIKFWGKFKVYEGDVEEFLRQTKDANVNYEIIKWKPKGHAEMLEDVLHLGNTLKAAEIAGSRFYYLFNDIVWLDFALLLFAIDYITQQGYTLVLPPYMLRGEVIQSVIDLDTFKDAIYKIENEDLYLIATAEHSVAAMFFKEEIEKDKLPLKFAGISPAFRKEAGAANKDLKGIFRVHQFHKVEQFIFSTPEDSWKYHAELITNAESIFQQLELPYRIVNIASGDLGACAAKKFDLEVWMPAQAKFREMVSCSNCTDWQAFRMKIRYVDRKNNKRGYVHTLNSTAIASTRTITAILENYQREDGVVEVPKVLRKYLEIFPKAPKDYIYPLKNKII.

252–254 (TAE) contributes to the L-serine binding site. Residues 283-285 (RKE) and valine 299 each bind ATP. Position 306 (glutamate 306) interacts with L-serine. 370–373 (EMVS) serves as a coordination point for ATP. Residue threonine 406 participates in L-serine binding.

It belongs to the class-II aminoacyl-tRNA synthetase family. Type-1 seryl-tRNA synthetase subfamily. In terms of assembly, homodimer. The tRNA molecule binds across the dimer.

Its subcellular location is the cytoplasm. The enzyme catalyses tRNA(Ser) + L-serine + ATP = L-seryl-tRNA(Ser) + AMP + diphosphate + H(+). The catalysed reaction is tRNA(Sec) + L-serine + ATP = L-seryl-tRNA(Sec) + AMP + diphosphate + H(+). Its pathway is aminoacyl-tRNA biosynthesis; selenocysteinyl-tRNA(Sec) biosynthesis; L-seryl-tRNA(Sec) from L-serine and tRNA(Sec): step 1/1. Catalyzes the attachment of serine to tRNA(Ser). Is also able to aminoacylate tRNA(Sec) with serine, to form the misacylated tRNA L-seryl-tRNA(Sec), which will be further converted into selenocysteinyl-tRNA(Sec). The protein is Serine--tRNA ligase of Saccharolobus islandicus (strain M.14.25 / Kamchatka #1) (Sulfolobus islandicus).